We begin with the raw amino-acid sequence, 315 residues long: MKFKHTSVLLHETIDNLKPKNDGLYVDATFGGGGHAKYLLSKIDTGTLIGFDQDEYAIKSAELNFANLLKPDSEPKLQLVHDNFSNLEENLVKLGYTDGIDGIYYDLGVSSPQFDQADRGFSYRYNARLDMRMNQDQDLDAYQLVNTLSQKELADILYQYGDEKFSRQIAHKIVEKRKEKPIVTTFELVDIIKDAIPAYARRTGGHPAKKSFQALRVAVNHELDVLQASLEEAIKVLRPGGRISVITFQSHEDKIVKKIFKKYSEVEVPRGMPFIPDDMKPTLKLVNRKPIVASDSELENNNRSHSAKLRVAEKL.

S-adenosyl-L-methionine-binding positions include 33–35, aspartate 52, phenylalanine 84, aspartate 106, and glutamine 113; that span reads GGH.

This sequence belongs to the methyltransferase superfamily. RsmH family.

Its subcellular location is the cytoplasm. The catalysed reaction is cytidine(1402) in 16S rRNA + S-adenosyl-L-methionine = N(4)-methylcytidine(1402) in 16S rRNA + S-adenosyl-L-homocysteine + H(+). Functionally, specifically methylates the N4 position of cytidine in position 1402 (C1402) of 16S rRNA. The sequence is that of Ribosomal RNA small subunit methyltransferase H from Lactobacillus acidophilus (strain ATCC 700396 / NCK56 / N2 / NCFM).